Reading from the N-terminus, the 151-residue chain is 3-hydroxyacyl-[acyl-carrier-protein] dehydratase FabZ (151 aa).

Residue histidine 58 is part of the active site.

This sequence belongs to the thioester dehydratase family. FabZ subfamily.

It localises to the cytoplasm. It catalyses the reaction a (3R)-hydroxyacyl-[ACP] = a (2E)-enoyl-[ACP] + H2O. Involved in unsaturated fatty acids biosynthesis. Catalyzes the dehydration of short chain beta-hydroxyacyl-ACPs and long chain saturated and unsaturated beta-hydroxyacyl-ACPs. In Histophilus somni (strain 129Pt) (Haemophilus somnus), this protein is 3-hydroxyacyl-[acyl-carrier-protein] dehydratase FabZ.